Reading from the N-terminus, the 323-residue chain is Beta-ketoacyl-[acyl-carrier-protein] synthase III 1 (323 aa).

Catalysis depends on residues Cys114 and His254. The tract at residues 255–259 (QANLR) is ACP-binding. The active site involves Asn284.

It belongs to the thiolase-like superfamily. FabH family. As to quaternary structure, homodimer.

Its subcellular location is the cytoplasm. The enzyme catalyses malonyl-[ACP] + acetyl-CoA + H(+) = 3-oxobutanoyl-[ACP] + CO2 + CoA. Its pathway is lipid metabolism; fatty acid biosynthesis. Catalyzes the condensation reaction of fatty acid synthesis by the addition to an acyl acceptor of two carbons from malonyl-ACP. Catalyzes the first condensation reaction which initiates fatty acid synthesis and may therefore play a role in governing the total rate of fatty acid production. Possesses both acetoacetyl-ACP synthase and acetyl transacylase activities. Its substrate specificity determines the biosynthesis of branched-chain and/or straight-chain of fatty acids. The sequence is that of Beta-ketoacyl-[acyl-carrier-protein] synthase III 1 from Lactiplantibacillus plantarum (strain ATCC BAA-793 / NCIMB 8826 / WCFS1) (Lactobacillus plantarum).